The sequence spans 32 residues: Cyclotide glopa A (32 aa).

Residues 1-32 (GGSIPCIETCVWTGCFLVPGCSCKSDKKCYLN) constitute a cross-link (cyclopeptide (Gly-Asn)). Cystine bridges form between cysteine 6–cysteine 21, cysteine 10–cysteine 23, and cysteine 15–cysteine 29.

This is a cyclic peptide.

Its function is as follows. Probably participates in a plant defense mechanism. The sequence is that of Cyclotide glopa A from Gloeospermum pauciflorum.